We begin with the raw amino-acid sequence, 454 residues long: Rhizobactin siderophore biosynthesis protein RhbE (454 aa).

7 to 13 (AGIGIGP) is an FAD binding site.

The protein belongs to the lysine N(6)-hydroxylase/L-ornithine N(5)-oxygenase family. The cofactor is FAD.

It participates in siderophore biosynthesis; rhizobactin biosynthesis. The chain is Rhizobactin siderophore biosynthesis protein RhbE (rhbE) from Rhizobium meliloti (strain 1021) (Ensifer meliloti).